Consider the following 424-residue polypeptide: Histidine--tRNA ligase (424 aa).

Belongs to the class-II aminoacyl-tRNA synthetase family. Homodimer.

Its subcellular location is the cytoplasm. The catalysed reaction is tRNA(His) + L-histidine + ATP = L-histidyl-tRNA(His) + AMP + diphosphate + H(+). This is Histidine--tRNA ligase from Pediococcus pentosaceus (strain ATCC 25745 / CCUG 21536 / LMG 10740 / 183-1w).